Consider the following 247-residue polypeptide: Pyrroloquinoline-quinone synthase (247 aa).

The protein belongs to the PqqC family.

It catalyses the reaction 6-(2-amino-2-carboxyethyl)-7,8-dioxo-1,2,3,4,7,8-hexahydroquinoline-2,4-dicarboxylate + 3 O2 = pyrroloquinoline quinone + 2 H2O2 + 2 H2O + H(+). Its pathway is cofactor biosynthesis; pyrroloquinoline quinone biosynthesis. Its function is as follows. Ring cyclization and eight-electron oxidation of 3a-(2-amino-2-carboxyethyl)-4,5-dioxo-4,5,6,7,8,9-hexahydroquinoline-7,9-dicarboxylic-acid to PQQ. The sequence is that of Pyrroloquinoline-quinone synthase from Rhizobium rhizogenes (strain K84 / ATCC BAA-868) (Agrobacterium radiobacter).